Here is a 481-residue protein sequence, read N- to C-terminus: 2-succinylbenzoate--CoA ligase (481 aa).

The protein belongs to the ATP-dependent AMP-binding enzyme family. MenE subfamily.

It catalyses the reaction 2-succinylbenzoate + ATP + CoA = 2-succinylbenzoyl-CoA + AMP + diphosphate. Its pathway is quinol/quinone metabolism; 1,4-dihydroxy-2-naphthoate biosynthesis; 1,4-dihydroxy-2-naphthoate from chorismate: step 5/7. It functions in the pathway quinol/quinone metabolism; menaquinone biosynthesis. In terms of biological role, converts 2-succinylbenzoate (OSB) to 2-succinylbenzoyl-CoA (OSB-CoA). The sequence is that of 2-succinylbenzoate--CoA ligase from Bacillus cereus (strain Q1).